The primary structure comprises 288 residues: Elongation factor Ts (288 aa).

The tract at residues 82-85 is involved in Mg(2+) ion dislocation from EF-Tu; sequence TDFV.

It belongs to the EF-Ts family.

It is found in the cytoplasm. Associates with the EF-Tu.GDP complex and induces the exchange of GDP to GTP. It remains bound to the aminoacyl-tRNA.EF-Tu.GTP complex up to the GTP hydrolysis stage on the ribosome. The sequence is that of Elongation factor Ts from Prosthecochloris aestuarii (strain DSM 271 / SK 413).